Consider the following 385-residue polypeptide: Succinate--CoA ligase [ADP-forming] subunit beta (385 aa).

The ATP-grasp domain maps to 9 to 243 (KEILSAYGIP…YSQLDTLEIN (235 aa)). ATP contacts are provided by residues Lys-45, 52-54 (GRG), Glu-98, Val-101, and Glu-106. 2 residues coordinate Mg(2+): Asn-198 and Asp-212. Substrate is bound by residues Asn-263 and 320-322 (GIM).

The protein belongs to the succinate/malate CoA ligase beta subunit family. As to quaternary structure, heterotetramer of two alpha and two beta subunits. Requires Mg(2+) as cofactor.

It catalyses the reaction succinate + ATP + CoA = succinyl-CoA + ADP + phosphate. The catalysed reaction is GTP + succinate + CoA = succinyl-CoA + GDP + phosphate. Its pathway is carbohydrate metabolism; tricarboxylic acid cycle; succinate from succinyl-CoA (ligase route): step 1/1. Succinyl-CoA synthetase functions in the citric acid cycle (TCA), coupling the hydrolysis of succinyl-CoA to the synthesis of either ATP or GTP and thus represents the only step of substrate-level phosphorylation in the TCA. The beta subunit provides nucleotide specificity of the enzyme and binds the substrate succinate, while the binding sites for coenzyme A and phosphate are found in the alpha subunit. In Geobacter sulfurreducens (strain ATCC 51573 / DSM 12127 / PCA), this protein is Succinate--CoA ligase [ADP-forming] subunit beta.